A 1020-amino-acid chain; its full sequence is Protein CLASP-2 (1020 aa).

Positions 259 to 271 (ASDAASSSTSINS) are enriched in low complexity. Disordered stretches follow at residues 259-280 (ASDAASSSTSINSERGTAPFRS), 329-387 (PMTT…RPSA), and 419-461 (LQKA…ALDT). Residues 329–343 (PMTTRTLSKIDTSPG) show a composition bias toward polar residues. Low complexity predominate over residues 372-381 (SQPGSRNGSP). Residues 450–460 (QKATPQKSALD) are compositionally biased toward polar residues. Residues 954–992 (LAPCVIKSYDSPSSAVRKTAVYCLVAMVNKLGMKTMEPH) form an HEAT repeat.

Belongs to the CLASP family. Interacts with hcp-1 and hcp-2.

The protein resides in the cytoplasm. Its subcellular location is the cytoskeleton. It localises to the microtubule organizing center. The protein localises to the centrosome. It is found in the chromosome. The protein resides in the centromere. Its subcellular location is the kinetochore. It localises to the spindle. In terms of biological role, probable microtubule plus-end tracking protein that promotes the stabilization of dynamic microtubules. Required for the formation of mitotic and meiotic spindles. Specifically promotes the polymerization of kinetochore-bound microtubules. Also required for cytoplasmic streaming. Essential for embryonic development. This chain is Protein CLASP-2 (cls-2), found in Caenorhabditis elegans.